Consider the following 290-residue polypeptide: 33 kDa chaperonin (290 aa).

Intrachain disulfides connect cysteine 235–cysteine 237 and cysteine 268–cysteine 271.

It belongs to the HSP33 family. Under oxidizing conditions two disulfide bonds are formed involving the reactive cysteines. Under reducing conditions zinc is bound to the reactive cysteines and the protein is inactive.

It localises to the cytoplasm. In terms of biological role, redox regulated molecular chaperone. Protects both thermally unfolding and oxidatively damaged proteins from irreversible aggregation. Plays an important role in the bacterial defense system toward oxidative stress. In Streptococcus pyogenes serotype M2 (strain MGAS10270), this protein is 33 kDa chaperonin.